The primary structure comprises 323 residues: Ankyrin repeat and SOCS box protein 11 (323 aa).

ANK repeat units follow at residues 64-93 (ADRSPLHEAAAQGRLLALKTLIAQGVNVNL), 97-126 (NRVSSLHEACLGGHVACAKALLENGAHVNG), 130-159 (HGATPLFNACCSGSAACVNVLLEFGAKAQL), 162-191 (HLASPIHEAVKRGHRECMEILLANNVNIDH), 195-224 (QLGTPLYVACTYQRVDCVKKLLELGASVDH), and 227-256 (WLDTPLHAAARQSNVEVIHLLTDYGANLKR). An SOCS box domain is found at 273–323 (SVEQALLLREGPPALSQLCRLCVRKCLGRACHQAIHKLHLPEPLERFLLYQ).

This sequence belongs to the ankyrin SOCS box (ASB) family. As to quaternary structure, substrate-recognition component of the ECS(ASB11) complex, composed of ASB11, CUL5, ELOB, ELOC and RNF7/RBX2.

Its subcellular location is the endoplasmic reticulum. It functions in the pathway protein modification; protein ubiquitination. Substrate-recognition component of a cullin-5-RING E3 ubiquitin-protein ligase complex (ECS complex, also named CRL5 complex), which mediates the ubiquitination and subsequent proteasomal degradation of target proteins, such as BIK, DIRAS2 and RPN1. The ECS(ASB11) complex acts as a regulator of the endoplasmic reticulum unfolded protein response by mediating ubiquitination and degradation of BIK. This chain is Ankyrin repeat and SOCS box protein 11, found in Homo sapiens (Human).